The following is a 492-amino-acid chain: Ribose import ATP-binding protein RbsA (492 aa).

2 ABC transporter domains span residues 3–239 (IEMK…VGRS) and 249–492 (AEIR…TGGK). 35–42 (GENGAGKS) lines the ATP pocket.

It belongs to the ABC transporter superfamily. Ribose importer (TC 3.A.1.2.1) family. In terms of assembly, the complex is composed of an ATP-binding protein (RbsA), two transmembrane proteins (RbsC) and a solute-binding protein (RbsB).

It localises to the cell membrane. It catalyses the reaction D-ribose(out) + ATP + H2O = D-ribose(in) + ADP + phosphate + H(+). Part of the ABC transporter complex RbsABC involved in ribose import. Responsible for energy coupling to the transport system. This chain is Ribose import ATP-binding protein RbsA, found in Lactococcus lactis subsp. cremoris (strain SK11).